The following is a 343-amino-acid chain: 4-hydroxythreonine-4-phosphate dehydrogenase (343 aa).

Residues H141 and T142 each contribute to the substrate site. Positions 175, 220, and 275 each coordinate a divalent metal cation. Substrate-binding residues include K283, N292, and R301.

It belongs to the PdxA family. As to quaternary structure, homodimer. The cofactor is Zn(2+). Mg(2+) is required as a cofactor. It depends on Co(2+) as a cofactor.

Its subcellular location is the cytoplasm. It catalyses the reaction 4-(phosphooxy)-L-threonine + NAD(+) = 3-amino-2-oxopropyl phosphate + CO2 + NADH. It participates in cofactor biosynthesis; pyridoxine 5'-phosphate biosynthesis; pyridoxine 5'-phosphate from D-erythrose 4-phosphate: step 4/5. Functionally, catalyzes the NAD(P)-dependent oxidation of 4-(phosphooxy)-L-threonine (HTP) into 2-amino-3-oxo-4-(phosphooxy)butyric acid which spontaneously decarboxylates to form 3-amino-2-oxopropyl phosphate (AHAP). The polypeptide is 4-hydroxythreonine-4-phosphate dehydrogenase (Janthinobacterium sp. (strain Marseille) (Minibacterium massiliensis)).